The following is a 224-amino-acid chain: UPF0758 protein lmo1549 (224 aa).

The MPN domain occupies 102 to 224 (VVRCPEDAVK…YISLKEKGYF (123 aa)). Zn(2+) contacts are provided by His173, His175, and Asp186. The JAMM motif signature appears at 173-186 (HNHPSGDPTPSSED).

This sequence belongs to the UPF0758 family.

This chain is UPF0758 protein lmo1549, found in Listeria monocytogenes serovar 1/2a (strain ATCC BAA-679 / EGD-e).